We begin with the raw amino-acid sequence, 159 residues long: Membrane protein FAM174B (159 aa).

The first 27 residues, 1–27 (MRAALPPARLLPLLLLLALLGAPAARA), serve as a signal peptide directing secretion. The interval 28 to 73 (SRAQSAAPPQPGAERQPRPPPGPGPGNATGTGSGEAAGGGGSSNSS) is disordered. At 28-90 (SRAQSAAPPQ…ISSLLRDLHT (63 aa)) the chain is on the extracellular side. A compositionally biased stretch (gly residues) spans 52-69 (PGNATGTGSGEAAGGGGS). N-linked (GlcNAc...) asparagine glycosylation occurs at asparagine 54. Residues 91 to 111 (LKAAVIVACAFTAFLIACLLL) form a helical membrane-spanning segment. Residues 112–159 (RVFRSGKRLKKTRKYDIITTPAERVEMAPLNEEDDEDEDSTVFDIKYR) are Cytoplasmic-facing.

It belongs to the FAM174 family.

Its subcellular location is the cell membrane. It localises to the golgi apparatus. Essential for Golgi structural integrity. This chain is Membrane protein FAM174B (FAM174B), found in Bos taurus (Bovine).